The primary structure comprises 247 residues: tRNA pseudouridine synthase A 1 (247 aa).

The Nucleophile role is filled by D53. Y111 provides a ligand contact to substrate.

It belongs to the tRNA pseudouridine synthase TruA family. Homodimer.

It carries out the reaction uridine(38/39/40) in tRNA = pseudouridine(38/39/40) in tRNA. Formation of pseudouridine at positions 38, 39 and 40 in the anticodon stem and loop of transfer RNAs. This chain is tRNA pseudouridine synthase A 1, found in Bacillus cereus (strain ZK / E33L).